The following is a 56-amino-acid chain: Large ribosomal subunit protein bL33 (56 aa).

The protein belongs to the bacterial ribosomal protein bL33 family.

In Actinobacillus pleuropneumoniae serotype 5b (strain L20), this protein is Large ribosomal subunit protein bL33.